The sequence spans 473 residues: Bifunctional protein HldE (473 aa).

A ribokinase region spans residues 1–318 (MKLSMPRFDQ…RAIQREEGSE (318 aa)). 194–197 (NLSE) is an ATP binding site. D263 is a catalytic residue. The interval 343 to 473 (FTNGCFDILH…TAIVEKIRKN (131 aa)) is cytidylyltransferase.

The protein in the N-terminal section; belongs to the carbohydrate kinase PfkB family. In the C-terminal section; belongs to the cytidylyltransferase family. As to quaternary structure, homodimer.

The catalysed reaction is D-glycero-beta-D-manno-heptose 7-phosphate + ATP = D-glycero-beta-D-manno-heptose 1,7-bisphosphate + ADP + H(+). It catalyses the reaction D-glycero-beta-D-manno-heptose 1-phosphate + ATP + H(+) = ADP-D-glycero-beta-D-manno-heptose + diphosphate. The protein operates within nucleotide-sugar biosynthesis; ADP-L-glycero-beta-D-manno-heptose biosynthesis; ADP-L-glycero-beta-D-manno-heptose from D-glycero-beta-D-manno-heptose 7-phosphate: step 1/4. It participates in nucleotide-sugar biosynthesis; ADP-L-glycero-beta-D-manno-heptose biosynthesis; ADP-L-glycero-beta-D-manno-heptose from D-glycero-beta-D-manno-heptose 7-phosphate: step 3/4. Functionally, catalyzes the phosphorylation of D-glycero-D-manno-heptose 7-phosphate at the C-1 position to selectively form D-glycero-beta-D-manno-heptose-1,7-bisphosphate. Its function is as follows. Catalyzes the ADP transfer from ATP to D-glycero-beta-D-manno-heptose 1-phosphate, yielding ADP-D-glycero-beta-D-manno-heptose. This Pseudomonas putida (strain GB-1) protein is Bifunctional protein HldE.